The primary structure comprises 269 residues: Staphylococcal secretory antigen ssaA2 (269 aa).

Residues 1-27 form the signal peptide; sequence MKKIATATIATAGFATIAIASGNQAHA. 7 repeat units span residues 83–85, 88–90, 91–93, 97–99, 103–105, 106–108, and 115–117. The interval 83–115 is 7 X 3 AA repeats of Y-[NS]-N; that stretch reads YNNYSYNNYNNGYSYNNYSRYNNYSNNNQSYNY. Positions 148-269 constitute a Peptidase C51 domain; the sequence is MAPSSNGRSI…SQAAGYNFIH (122 aa).

It is found in the secreted. Its function is as follows. Not known; immunogenic protein. This is Staphylococcal secretory antigen ssaA2 (ssaA2) from Staphylococcus aureus (strain MRSA252).